Consider the following 189-residue polypeptide: UPF0301 protein RrIowa_0061 (189 aa).

The protein belongs to the UPF0301 (AlgH) family.

The protein is UPF0301 protein RrIowa_0061 of Rickettsia rickettsii (strain Iowa).